The chain runs to 296 residues: Ethanolamine ammonia-lyase small subunit (296 aa).

Adenosylcob(III)alamin is bound by residues V209 and E230.

The protein belongs to the EutC family. The basic unit is a heterodimer which dimerizes to form tetramers. The heterotetramers trimerize; 6 large subunits form a core ring with 6 small subunits projecting outwards. Adenosylcob(III)alamin is required as a cofactor.

The protein localises to the bacterial microcompartment. The catalysed reaction is ethanolamine = acetaldehyde + NH4(+). It participates in amine and polyamine degradation; ethanolamine degradation. Functionally, catalyzes the deamination of various vicinal amino-alcohols to oxo compounds. Allows this organism to utilize ethanolamine as the sole source of nitrogen and carbon in the presence of external vitamin B12. The chain is Ethanolamine ammonia-lyase small subunit from Lachnoclostridium phytofermentans (strain ATCC 700394 / DSM 18823 / ISDg) (Clostridium phytofermentans).